The following is a 186-amino-acid chain: Superoxide dismutase [Cu-Zn] (186 aa).

The signal sequence occupies residues 1-22; the sequence is MNMKTLLALAVSAVCSVSVAQA. The Cu cation site is built by His79, His81, and His104. Cys86 and Cys182 are disulfide-bonded. Residues His104, His113, His122, and Asp125 each contribute to the Zn(2+) site. Residue His160 participates in Cu cation binding.

It belongs to the Cu-Zn superoxide dismutase family. Homodimer. Cu cation serves as cofactor. The cofactor is Zn(2+).

It is found in the periplasm. It carries out the reaction 2 superoxide + 2 H(+) = H2O2 + O2. Its function is as follows. Destroys radicals which are normally produced within the cells and which are toxic to biological systems. This is Superoxide dismutase [Cu-Zn] (sodC) from Neisseria meningitidis serogroup A / serotype 4A (strain DSM 15465 / Z2491).